The primary structure comprises 60 residues: Hemocyte defensin Cg-Defh2 (60 aa).

A signal peptide spans 1 to 17; that stretch reads LLTLAVLLMVSADMAFA. The beta-D-GlcNAc-(1-&gt;4)-Mur2Ac(oyl-L-Ala-gamma-D-Glu-L-Lys-D-Ala-D-Ala)-di-trans,octa-cis-undecaprenyl diphosphate site is built by phenylalanine 19, glycine 20, and cysteine 21. 4 disulfides stabilise this stretch: cysteine 21-cysteine 42, cysteine 28-cysteine 51, cysteine 32-cysteine 53, and cysteine 37-cysteine 56. Positions 22-25 are binds to membrane interface; that stretch reads PGDQ. Histidine 31 contributes to the beta-D-GlcNAc-(1-&gt;4)-Mur2Ac(oyl-L-Ala-gamma-D-Glu-L-Lys-D-Ala-D-Ala)-di-trans,octa-cis-undecaprenyl diphosphate binding site. Residues 43–49 are binds to membrane interface; it reads DAVTLWL. Residue cysteine 51 participates in beta-D-GlcNAc-(1-&gt;4)-Mur2Ac(oyl-L-Ala-gamma-D-Glu-L-Lys-D-Ala-D-Ala)-di-trans,octa-cis-undecaprenyl diphosphate binding.

The protein belongs to the invertebrate defensin family. Expressed in hemocytes.

Its subcellular location is the secreted. The protein resides in the target cell membrane. Antibacterial peptide mostly active against Gram-positive bacteria. It acts by selectively inhibiting peptidoglycan biosynthesis through complex formation with the cell wall precursor lipid II (1:1 molar ratio) thus inhibiting cell wall synthesis. It does not disrupt cell membranes. Is noticeably more potent than Cg-Defh1. The sequence is that of Hemocyte defensin Cg-Defh2 from Magallana gigas (Pacific oyster).